We begin with the raw amino-acid sequence, 510 residues long: Ectonucleoside triphosphate diphosphohydrolase 1 (510 aa).

Topologically, residues Met-1–Asn-16 are cytoplasmic. The helical transmembrane segment at Ile-17–Leu-37 threads the bilayer. Topologically, residues Thr-38–Tyr-477 are extracellular. A glycan (N-linked (GlcNAc...) asparagine) is linked at Asn-73. Residues Cys-84 and Cys-108 are joined by a disulfide bond. The active-site Proton acceptor is Glu-174. 4 N-linked (GlcNAc...) asparagine glycosylation sites follow: Asn-245, Asn-274, Asn-291, and Asn-333. 2 cysteine pairs are disulfide-bonded: Cys-255-Cys-300 and Cys-281-Cys-324. An intrachain disulfide couples Cys-337 to Cys-342. Residue Asn-370 is glycosylated (N-linked (GlcNAc...) asparagine). Cys-390 and Cys-413 form a disulfide bridge. Asn-457 carries an N-linked (GlcNAc...) asparagine glycan. The helical transmembrane segment at Val-478–Val-498 threads the bilayer. Residues Cys-499–Val-510 are Cytoplasmic-facing.

Belongs to the GDA1/CD39 NTPase family. As to quaternary structure, homodimer; disulfide-linked. It depends on Ca(2+) as a cofactor. Requires Mg(2+) as cofactor. In terms of processing, N-glycosylated. Post-translationally, cleaved into two polypeptides that seem to stay together by non-covalent interactions. The N-terminus is blocked. In terms of processing, palmitoylated on Cys-13; which is required for caveola targeting. Highest expression found in vascular endothelium, smooth muscle, spleen and lung (at protein level). High expression also found in stomach, duodenum, kidney, lymph node and aorta (at protein level).

The protein resides in the membrane. Its subcellular location is the caveola. The catalysed reaction is a ribonucleoside 5'-triphosphate + 2 H2O = a ribonucleoside 5'-phosphate + 2 phosphate + 2 H(+). It carries out the reaction a ribonucleoside 5'-triphosphate + H2O = a ribonucleoside 5'-diphosphate + phosphate + H(+). The enzyme catalyses a ribonucleoside 5'-diphosphate + H2O = a ribonucleoside 5'-phosphate + phosphate + H(+). It catalyses the reaction ATP + 2 H2O = AMP + 2 phosphate + 2 H(+). The catalysed reaction is ATP + H2O = ADP + phosphate + H(+). It carries out the reaction ADP + H2O = AMP + phosphate + H(+). The enzyme catalyses CTP + 2 H2O = CMP + 2 phosphate + 2 H(+). It catalyses the reaction CTP + H2O = CDP + phosphate + H(+). The catalysed reaction is CDP + H2O = CMP + phosphate + H(+). It carries out the reaction GTP + 2 H2O = GMP + 2 phosphate + 2 H(+). The enzyme catalyses GTP + H2O = GDP + phosphate + H(+). It catalyses the reaction GDP + H2O = GMP + phosphate + H(+). The catalysed reaction is ITP + 2 H2O = IMP + 2 phosphate + 2 H(+). It carries out the reaction ITP + H2O = IDP + phosphate + H(+). The enzyme catalyses IDP + H2O = IMP + phosphate + H(+). It catalyses the reaction UTP + 2 H2O = UMP + 2 phosphate + 2 H(+). The catalysed reaction is UTP + H2O = UDP + phosphate + H(+). It carries out the reaction UDP + H2O = UMP + phosphate + H(+). With respect to regulation, the ATP diphosphohydrolase activity is decreased by half by sodium azide. Functionally, catalyzes the hydrolysis of both di- and triphosphate nucleotides (NDPs and NTPs) and hydrolyze NTPs to nucleotide monophosphates (NMPs) in two distinct successive phosphate-releasing steps, with NDPs as intermediates and participates in the regulation of extracellular levels of nucleotides. By hydrolyzing proinflammatory ATP and platelet-activating ADP to AMP, it blocks platelet aggregation and supports blood flow. This chain is Ectonucleoside triphosphate diphosphohydrolase 1, found in Sus scrofa (Pig).